The following is a 368-amino-acid chain: MSETAKKVIVGMSGGVDSSVSAWLLQQQGYQVEGLFMKNWEEDDGEEYCTAAADLADAQAVCDKLGIELHTVNFAAEYWDNVFELFLAEYKAGRTPNPDILCNKEIKFKAFLEFAAEDLCADYIATGHYVRRAXVDGKSRLLRGLDSNKDQSYFLYTLSHEQIAQSLFPVGELEKPQVRKIAEDLGLVTAKKKDSTGICFIGERKFRKFLGRYLPAQPGKIITVDGDEIGEHQGLMYHTLGQRKGLGIGGTKDGTEEPWYVVDKDVENNILIVAQGHEHPRLMSVGLIAQQLHWVDREPFTGTMRCTVKTRYRQTDIPCTVKALDADRIEVIFDEPVAAVTPGQSAVFYNGEVCLGGGIIEQRLPLPV.

ATP contacts are provided by residues 11–18 (GMSGGVDS) and Met37. An interaction with target base in tRNA region spans residues 97-99 (NPD). The Nucleophile role is filled by Cys102. Cysteines 102 and 199 form a disulfide. Gly127 lines the ATP pocket. The interaction with tRNA stretch occupies residues 149–151 (KDQ). Cys199 serves as the catalytic Cysteine persulfide intermediate. An interaction with tRNA region spans residues 311-312 (RY).

Belongs to the MnmA/TRMU family. Interacts with TusE.

The protein resides in the cytoplasm. It carries out the reaction S-sulfanyl-L-cysteinyl-[protein] + uridine(34) in tRNA + AH2 + ATP = 2-thiouridine(34) in tRNA + L-cysteinyl-[protein] + A + AMP + diphosphate + H(+). Its function is as follows. Catalyzes the 2-thiolation of uridine at the wobble position (U34) of tRNA(Lys), tRNA(Glu) and tRNA(Gln), leading to the formation of s(2)U34, the first step of tRNA-mnm(5)s(2)U34 synthesis. Sulfur is provided by IscS, via a sulfur-relay system. Binds ATP and its substrate tRNAs. In Escherichia coli O6:H1 (strain CFT073 / ATCC 700928 / UPEC), this protein is tRNA-specific 2-thiouridylase MnmA.